We begin with the raw amino-acid sequence, 142 residues long: Putative pre-16S rRNA nuclease (142 aa).

The protein belongs to the YqgF nuclease family.

Its subcellular location is the cytoplasm. Its function is as follows. Could be a nuclease involved in processing of the 5'-end of pre-16S rRNA. The chain is Putative pre-16S rRNA nuclease from Staphylococcus carnosus (strain TM300).